We begin with the raw amino-acid sequence, 599 residues long: Fructan 1-exohydrolase (599 aa).

A signal peptide spans 1 to 16; it reads MAQAWAFLLLPALALA. D78 is a catalytic residue. N-linked (GlcNAc...) asparagine glycosylation is found at N171, N239, and N251. C449 and C495 are oxidised to a cystine.

The protein belongs to the glycosyl hydrolase 32 family.

The enzyme catalyses Hydrolysis of terminal, non-reducing (2-&gt;1)-linked beta-D-fructofuranose residues in fructans.. Its activity is regulated as follows. Inhibited by sucrose. Its function is as follows. Hydrolyzes inulin-type beta-(2,1)-fructans. May play a role as a beta-(2,1)-trimmer during graminan biosynthesis. The protein is Fructan 1-exohydrolase of Hordeum vulgare (Barley).